Consider the following 633-residue polypeptide: Early transcription factor 70 kDa subunit (633 aa).

Residues 32–185 enclose the Helicase ATP-binding domain; it reads RTILDHNESV…SNIISIMSDE (154 aa). Residue 45–52 coordinates ATP; it reads HIMGSGKT. A DEXH box motif is present at residues 135 to 138; sequence DEAH. The 180-residue stretch at 326–505 folds into the Helicase C-terminal domain; that stretch reads KFKYFIDTIG…TLPFDIKKLL (180 aa).

Belongs to the helicase family. VETF subfamily. As to quaternary structure, heterodimer of a 70 kDa and a 82 kDa subunit. Part of the early transcription complex composed of ETF, RAP94, and the DNA-directed RNA polymerase.

It localises to the virion. Its function is as follows. Acts with RNA polymerase to initiate transcription from early gene promoters. Is recruited by the RPO-associated protein of 94 kDa (RAP94) to form the early transcription complex, which also contains the core RNA polymerase. ETF heterodimer binds to early gene promoters. This Vertebrata (FPV) protein is Early transcription factor 70 kDa subunit (VETFS).